Reading from the N-terminus, the 126-residue chain is Non-specific lipid-transfer protein 15 (126 aa).

The N-terminal stretch at 1–22 is a signal peptide; the sequence is MSKSIFVVCITLLVVLSPTLNA. 4 cysteine pairs are disulfide-bonded: C34-C80, C45-C57, C58-C100, and C78-C114.

It belongs to the plant LTP family.

In terms of biological role, plant non-specific lipid-transfer proteins transfer phospholipids as well as galactolipids across membranes. May play a role in wax or cutin deposition in the cell walls of expanding epidermal cells and certain secretory tissues. This is Non-specific lipid-transfer protein 15 (LTP15) from Arabidopsis thaliana (Mouse-ear cress).